The chain runs to 33 residues: Gaegurin-1 (33 aa).

Cysteines 27 and 33 form a disulfide.

Belongs to the frog skin active peptide (FSAP) family. Brevinin subfamily. In terms of assembly, monomer. As to expression, expressed by the skin glands.

Its subcellular location is the secreted. In terms of biological role, has a non-hemolytic activity. Has a broad spectrum of activity against both Gram-positive and Gram-negative bacteria, fungi and protozoa. In Glandirana rugosa (Japanese wrinkled frog), this protein is Gaegurin-1 (GGN1).